Here is a 24-residue protein sequence, read N- to C-terminus: Heat shock 70 kDa protein 4L (24 aa).

Phosphothreonine is present on T19.

Belongs to the heat shock protein 70 family. In terms of assembly, homodimer. In the testis, forms a complex with p53 at 32.5 degrees Celsius which is scrotal temperature but not at 37 or 42 degrees Celsius. In terms of tissue distribution, expressed at high levels in testis and at much lower levels in brain. In testis, expressed mainly in germ cells. Widespread in brain with highest expression in cerebellum and medulla oblongata. Also expressed in renal medulla of water-restricted animals.

It is found in the cytoplasm. The protein localises to the nucleus. Its function is as follows. Possesses chaperone activity in vitro where it inhibits aggregation of citrate synthase. In Rattus norvegicus (Rat), this protein is Heat shock 70 kDa protein 4L (Hspa4l).